The sequence spans 780 residues: ATP-dependent 6-phosphofructokinase, muscle type (780 aa).

T2 carries the N-acetylthreonine modification. The segment at 2-390 (THEEHHATKT…NWEVYKLLAH (389 aa)) is N-terminal catalytic PFK domain 1. ATP contacts are provided by residues G25, 88–89 (RC), and 118–121 (GDGS). D119 contacts Mg(2+). S133 carries the phosphoserine modification. Substrate is bound by residues 164-166 (SID), R201, 208-210 (MGR), E264, R292, and 298-301 (HVQR). D166 acts as the Proton acceptor in catalysis. Position 377 is a phosphoserine (S377). Residues 391–401 (VRPPVSKSGSH) form an interdomain linker region. The segment at 402 to 780 (TVAVMNVGAP…TRKRSGEAAV (379 aa)) is C-terminal regulatory PFK domain 2. Beta-D-fructose 2,6-bisphosphate contacts are provided by residues R471 and 528 to 532 (TVSNN). S530 is a glycosylation site (O-linked (GlcNAc) serine). At K557 the chain carries N6-(2-hydroxyisobutyryl)lysine. Beta-D-fructose 2,6-bisphosphate-binding positions include R566, 573 to 575 (MGG), E629, R655, and 661 to 664 (HMQQ). Phosphoserine is present on S667. R735 serves as a coordination point for beta-D-fructose 2,6-bisphosphate. At S775 the chain carries Phosphoserine.

It belongs to the phosphofructokinase type A (PFKA) family. ATP-dependent PFK group I subfamily. Eukaryotic two domain clade 'E' sub-subfamily. In terms of assembly, homo- and heterotetramers. Phosphofructokinase (PFK) enzyme functions as a tetramer composed of different combinations of 3 types of subunits, called PFKM (M), PFKL (L) and PFKP (P). The composition of the PFK tetramer differs according to the tissue type it is present in. The kinetic and regulatory properties of the tetrameric enzyme are dependent on the subunit composition, hence can vary across tissues. Interacts (via C-terminus) with HK1 (via N-terminal spermatogenic cell-specific region). Requires Mg(2+) as cofactor. Post-translationally, glcNAcylation decreases enzyme activity.

The protein resides in the cytoplasm. It carries out the reaction beta-D-fructose 6-phosphate + ATP = beta-D-fructose 1,6-bisphosphate + ADP + H(+). It participates in carbohydrate degradation; glycolysis; D-glyceraldehyde 3-phosphate and glycerone phosphate from D-glucose: step 3/4. Allosterically activated by ADP, AMP, or fructose 2,6-bisphosphate, and allosterically inhibited by ATP or citrate. Functionally, catalyzes the phosphorylation of D-fructose 6-phosphate to fructose 1,6-bisphosphate by ATP, the first committing step of glycolysis. This is ATP-dependent 6-phosphofructokinase, muscle type (PFKM) from Pongo abelii (Sumatran orangutan).